Consider the following 3013-residue polypeptide: Protein furry homolog-like (3013 aa).

The residue at position 2 (serine 2) is an N-acetylserine. The segment at 90-109 (DESYEYRPRSSTKSKGDEQQ) is disordered. Serine 844 is modified (phosphoserine). 2 disordered regions span residues 878–897 (SSST…LAST) and 1476–1498 (VTSG…PDNK). The segment covering 1476 to 1486 (VTSGTTSSSNT) has biased composition (low complexity). Phosphoserine occurs at positions 1914, 1935, 1941, 1945, and 1957. At threonine 1959 the chain carries Phosphothreonine. Residues serine 1978, serine 2272, and serine 2454 each carry the phosphoserine modification. The tract at residues 2459-2492 (DKGDTPSLQEYQCSSSTPSLNLTNQEDTDESSEE) is disordered. Polar residues predominate over residues 2464–2483 (PSLQEYQCSSSTPSLNLTNQ). The residue at position 2499 (serine 2499) is a Phosphoserine. Disordered regions lie at residues 2508–2567 (LNSD…DTTS) and 2636–2660 (EEEA…EVQT). Polar residues-rich tracts occupy residues 2528–2539 (SEDSTGSITTEE) and 2555–2567 (DNAN…DTTS).

It belongs to the furry protein family. Widely expressed with higher expression in colon, placenta, brain and cells of lymphoid origin.

In terms of biological role, plays a key role in maintaining the integrity of polarized cell extensions during morphogenesis, regulates the actin cytoskeleton and plays a key role in patterning sensory neuron dendritic fields by promoting avoidance between homologous dendrites as well as by limiting dendritic branching. May function as a transcriptional activator. The polypeptide is Protein furry homolog-like (FRYL) (Homo sapiens (Human)).